A 429-amino-acid chain; its full sequence is Aspartate--tRNA(Asp/Asn) ligase (429 aa).

Glu-166 serves as a coordination point for L-aspartate. The interval 188 to 191 (QLYK) is aspartate. Residue Arg-210 coordinates L-aspartate. Residues 210–212 (RAE), 218–220 (RHL), and Glu-352 contribute to the ATP site. Positions 352 and 355 each coordinate Mg(2+). L-aspartate is bound by residues Ser-355 and Arg-359. Residue 400-403 (GAER) coordinates ATP.

Belongs to the class-II aminoacyl-tRNA synthetase family. Type 2 subfamily. In terms of assembly, homodimer. Mg(2+) is required as a cofactor.

The protein localises to the cytoplasm. It carries out the reaction tRNA(Asx) + L-aspartate + ATP = L-aspartyl-tRNA(Asx) + AMP + diphosphate. Aspartyl-tRNA synthetase with relaxed tRNA specificity since it is able to aspartylate not only its cognate tRNA(Asp) but also tRNA(Asn). Reaction proceeds in two steps: L-aspartate is first activated by ATP to form Asp-AMP and then transferred to the acceptor end of tRNA(Asp/Asn). The polypeptide is Aspartate--tRNA(Asp/Asn) ligase (Methanocorpusculum labreanum (strain ATCC 43576 / DSM 4855 / Z)).